The following is a 205-amino-acid chain: Glycerol-3-phosphate acyltransferase (205 aa).

A run of 4 helical transmembrane segments spans residues 4–24 (IAPG…AILV), 80–100 (PFWL…PIFF), 112–132 (FGAI…TWLL), and 138–158 (GYSS…VWWF).

Belongs to the PlsY family. Probably interacts with PlsX.

Its subcellular location is the cell inner membrane. It carries out the reaction an acyl phosphate + sn-glycerol 3-phosphate = a 1-acyl-sn-glycero-3-phosphate + phosphate. It functions in the pathway lipid metabolism; phospholipid metabolism. In terms of biological role, catalyzes the transfer of an acyl group from acyl-phosphate (acyl-PO(4)) to glycerol-3-phosphate (G3P) to form lysophosphatidic acid (LPA). This enzyme utilizes acyl-phosphate as fatty acyl donor, but not acyl-CoA or acyl-ACP. The polypeptide is Glycerol-3-phosphate acyltransferase (Cronobacter sakazakii (strain ATCC BAA-894) (Enterobacter sakazakii)).